The chain runs to 333 residues: MARLRLLIGLIFCLAISLDSVLSAPVISQISKDVVASVGDSVEFNCTVEEVGQLSVSWAKRPSESDTNSVVLSMRNILSLPDQRYNVTVTEGPKTGSAIYTFRIQNIEVSDMGPYECQVLVSATEKVTKKLSLQIKTPPVIAENTPKSTLVTEGQNLELTCHANGFPKPTISWAREHNAVMPAGGHLLAEPTLRIRSVHRMDRGGYYCIAQNGEGQPDKRLIRVEVEFRPQIAVQRPKIAQMVSHSAELECSVQGYPAPTVVWHKNGVPLQSSRHHEVANTASSSGTTTSVLRIDSVGEEDFGDYYCNATNKLGHADARLHLFQTVIPVPSLS.

A signal peptide spans 1–23 (MARLRLLIGLIFCLAISLDSVLS). The region spanning 25 to 128 (PVISQISKDV…VLVSATEKVT (104 aa)) is the Ig-like V-type domain. N-linked (GlcNAc...) asparagine glycosylation is found at N45 and N86. Disulfide bonds link C46/C117, C161/C208, and C251/C307. Ig-like C2-type domains lie at 139-223 (PVIA…RLIR) and 230-323 (PQIA…LHLF). N-linked (GlcNAc...) asparagine glycosylation is present at N308.

Its subcellular location is the cell membrane. This chain is Protein amalgam (Ama), found in Drosophila melanogaster (Fruit fly).